Reading from the N-terminus, the 786-residue chain is Protein SEY1 (786 aa).

Residues 1 to 684 (MSDLKEAIQL…KRSIVNTTER (684 aa)) lie on the Cytoplasmic side of the membrane. The 228-residue stretch at 35 to 262 (GVKYHVISVF…QDASFFKDEY (228 aa)) folds into the GB1/RHD3-type G domain. 45–52 (GSQSSGKS) is a GTP binding site. A coiled-coil region spans residues 355 to 375 (KKVYEERRDDLIKQLNTIIDE). Residues 685-705 (IPLYMYALVVALGWGRIITIL) traverse the membrane as a helical segment. Residues 706-708 (RNP) are Lumenal-facing. A helical membrane pass occupies residues 709 to 729 (ATIILSIIVLAGAYFVHKLNL). Residues 730 to 786 (WGPLLQFANQATGQATAVLKQTVRSLVVDEEPKRKILVEPHESEGVDKEPSKNDQHL) lie on the Cytoplasmic side of the membrane. The disordered stretch occupies residues 765–786 (ILVEPHESEGVDKEPSKNDQHL).

The protein belongs to the TRAFAC class dynamin-like GTPase superfamily. GB1/RHD3 GTPase family. RHD3 subfamily.

The protein localises to the endoplasmic reticulum membrane. In terms of biological role, cooperates with the reticulon proteins and tubule-shaping DP1 family proteins to generate and maintain the structure of the tubular endoplasmic reticulum network. Has GTPase activity, which is required for its function in ER organization. This Kluyveromyces lactis (strain ATCC 8585 / CBS 2359 / DSM 70799 / NBRC 1267 / NRRL Y-1140 / WM37) (Yeast) protein is Protein SEY1.